A 239-amino-acid polypeptide reads, in one-letter code: Mannose-binding protein A (239 aa).

The signal sequence occupies residues 1–18 (MLLLPLLPVLLCVVSVSS). The tract at residues 35 to 88 (ACGRDGRDGPKGEKGEPGQGLRGLQGPPGKLGPPGSVGSPGSPGPKGQKGDHGD) is disordered. The 53-residue stretch at 37–89 (GRDGRDGPKGEKGEPGQGLRGLQGPPGKLGPPGSVGSPGSPGPKGQKGDHGDN) folds into the Collagen-like domain. The span at 38–50 (RDGRDGPKGEKGE) shows a compositional bias: basic and acidic residues. Pro-44 carries the post-translational modification 4-hydroxyproline. 5-hydroxylysine occurs at positions 45 and 48. Residues Lys-45 and Lys-48 are each glycosylated (O-linked (Gal...) hydroxylysine). Residues Pro-51, Pro-62, Pro-68, Pro-74, and Pro-79 each carry the 4-hydroxyproline modification. The segment covering 58-74 (LQGPPGKLGPPGSVGSP) has biased composition (low complexity). Residues Lys-80 and Lys-83 each carry the 5-hydroxylysine modification. O-linked (Gal...) hydroxylysine glycans are attached at residues Lys-80 and Lys-83. The region spanning 144-239 (SLCTELQGTV…SFKAVCEFPA (96 aa)) is the C-type lectin domain. Cystine bridges form between Cys-146–Cys-235 and Cys-213–Cys-227. Residues Asp-179, Glu-183, Glu-203, Asn-205, Glu-211, Asp-212, Asn-223, and Asp-224 each coordinate Ca(2+). The segment at 203-211 (EPNNHGSGE) is calcium-dependent carbohydrate binding.

As to quaternary structure, homotrimer. Forms higher oligomeric complexes formed by the association of two, three or more homotrimers. Oligomerization occurs in the endoplasmic reticulum. Interacts with MASP1 and MASP2. Post-translationally, hydroxylated on lysine and proline residues within the collagen-like domain. In terms of processing, O-glycosylated. O-linked glycans on hydroxylysine residues consist of Glc-Gal disaccharides bound to the oxygen atom of post-translationally added hydroxyl groups. In terms of tissue distribution, detected in liver and blood serum (at protein level). Detected in liver.

Its subcellular location is the secreted. Functionally, calcium-dependent lectin. Plays a role in the innate immune response by binding mannose, fucose and N-acetylglucosamine moieties on different microorganisms and mediating activation of the lectin complement pathway. Binds to late apoptotic cells, as well as to apoptotic blebs and to necrotic cells, but not to early apoptotic cells, facilitating their uptake by macrophages. The chain is Mannose-binding protein A (Mbl1) from Mus musculus (Mouse).